A 134-amino-acid polypeptide reads, in one-letter code: Histone H2A (134 aa).

A compositionally biased stretch (gly residues) spans 1 to 10 (MTGGKSGGKA). The tract at residues 1-24 (MTGGKSGGKASGSKNAQSRSSKAG) is disordered. N6-acetyllysine occurs at positions 5 and 9. An N5-methylglutamine modification is found at glutamine 106. Residues 115–134 (QNLLPKKTPKSGKGPGSQEL) form a disordered region. Phosphoserine is present on serine 131. A [ST]-Q motif motif is present at residues 131–132 (SQ).

This sequence belongs to the histone H2A family. The nucleosome is a histone octamer containing two molecules each of H2A, H2B, H3 and H4 assembled in one H3-H4 heterotetramer and two H2A-H2B heterodimers. The octamer wraps approximately 147 bp of DNA. Phosphorylated to form H2AS128ph (gamma-H2A) in response to DNA double-strand breaks (DSBs) generated by exogenous genotoxic agents and by stalled replication forks. Phosphorylation is dependent on the DNA damage checkpoint kinases mec1/ATR and tel1/ATM, spreads on either side of a detected DSB site and may mark the surrounding chromatin for recruitment of proteins required for DNA damage signaling and repair. Gamma-H2A is removed from the DNA prior to the strand invasion-primer extension step of the repair process and subsequently dephosphorylated. Dephosphorylation is necessary for efficient recovery from the DNA damage checkpoint. Post-translationally, acetylated by esa1 to form H2AK4ac and H2AK7ac.

The protein localises to the nucleus. The protein resides in the chromosome. Core component of nucleosome which plays a central role in DNA double strand break (DSB) repair. Nucleosomes wrap and compact DNA into chromatin, limiting DNA accessibility to the cellular machineries which require DNA as a template. Histones thereby play a central role in transcription regulation, DNA repair, DNA replication and chromosomal stability. DNA accessibility is regulated via a complex set of post-translational modifications of histones, also called histone code, and nucleosome remodeling. The polypeptide is Histone H2A (httA) (Aspergillus niger (strain ATCC MYA-4892 / CBS 513.88 / FGSC A1513)).